The sequence spans 355 residues: Uroporphyrinogen decarboxylase (355 aa).

Substrate contacts are provided by residues 27–31 (RQAGR), aspartate 77, tyrosine 154, threonine 209, and histidine 327.

It belongs to the uroporphyrinogen decarboxylase family. In terms of assembly, homodimer.

It is found in the cytoplasm. The catalysed reaction is uroporphyrinogen III + 4 H(+) = coproporphyrinogen III + 4 CO2. The protein operates within porphyrin-containing compound metabolism; protoporphyrin-IX biosynthesis; coproporphyrinogen-III from 5-aminolevulinate: step 4/4. Functionally, catalyzes the decarboxylation of four acetate groups of uroporphyrinogen-III to yield coproporphyrinogen-III. The protein is Uroporphyrinogen decarboxylase of Pseudoalteromonas atlantica (strain T6c / ATCC BAA-1087).